The sequence spans 378 residues: 23S rRNA (uracil(747)-C(5))-methyltransferase RlmC (378 aa).

Positions 3, 11, 14, and 87 each coordinate [4Fe-4S] cluster. Gln-212, Phe-241, Glu-262, and Asn-309 together coordinate S-adenosyl-L-methionine. Catalysis depends on Cys-336, which acts as the Nucleophile.

The protein belongs to the class I-like SAM-binding methyltransferase superfamily. RNA M5U methyltransferase family. RlmC subfamily.

The enzyme catalyses uridine(747) in 23S rRNA + S-adenosyl-L-methionine = 5-methyluridine(747) in 23S rRNA + S-adenosyl-L-homocysteine + H(+). In terms of biological role, catalyzes the formation of 5-methyl-uridine at position 747 (m5U747) in 23S rRNA. The polypeptide is 23S rRNA (uracil(747)-C(5))-methyltransferase RlmC (Shewanella halifaxensis (strain HAW-EB4)).